Here is a 93-residue protein sequence, read N- to C-terminus: MFKVNEYFDGAVKSIAFQTETLPATVGVMAKGSYEFGTSQKEYMTVVSGSLTVVLPGSDKAETFTQGQTFIVEANQRFNVTADVESSYLCCYE.

Belongs to the nucleoside phosphorylase PpnP family.

The catalysed reaction is a purine D-ribonucleoside + phosphate = a purine nucleobase + alpha-D-ribose 1-phosphate. It catalyses the reaction adenosine + phosphate = alpha-D-ribose 1-phosphate + adenine. It carries out the reaction cytidine + phosphate = cytosine + alpha-D-ribose 1-phosphate. The enzyme catalyses guanosine + phosphate = alpha-D-ribose 1-phosphate + guanine. The catalysed reaction is inosine + phosphate = alpha-D-ribose 1-phosphate + hypoxanthine. It catalyses the reaction thymidine + phosphate = 2-deoxy-alpha-D-ribose 1-phosphate + thymine. It carries out the reaction uridine + phosphate = alpha-D-ribose 1-phosphate + uracil. The enzyme catalyses xanthosine + phosphate = alpha-D-ribose 1-phosphate + xanthine. Its function is as follows. Catalyzes the phosphorolysis of diverse nucleosides, yielding D-ribose 1-phosphate and the respective free bases. Can use uridine, adenosine, guanosine, cytidine, thymidine, inosine and xanthosine as substrates. Also catalyzes the reverse reactions. This is Pyrimidine/purine nucleoside phosphorylase from Cellvibrio japonicus (strain Ueda107) (Pseudomonas fluorescens subsp. cellulosa).